Here is a 173-residue protein sequence, read N- to C-terminus: NADH-ubiquinone oxidoreductase chain 6 (173 aa).

The next 5 membrane-spanning stretches (helical) occupy residues 1-21 (MTYF…AVAS), 27-47 (YGVV…LSLG), 48-68 (ASFV…VVFV), 87-107 (VIGY…IGGF), and 139-159 (WGAG…FVVL).

This sequence belongs to the complex I subunit 6 family.

The protein localises to the mitochondrion membrane. The enzyme catalyses a ubiquinone + NADH + 5 H(+)(in) = a ubiquinol + NAD(+) + 4 H(+)(out). Its function is as follows. Core subunit of the mitochondrial membrane respiratory chain NADH dehydrogenase (Complex I) that is believed to belong to the minimal assembly required for catalysis. Complex I functions in the transfer of electrons from NADH to the respiratory chain. The immediate electron acceptor for the enzyme is believed to be ubiquinone. This Brachyramphus brevirostris (Kittlitz's murrelet) protein is NADH-ubiquinone oxidoreductase chain 6 (MT-ND6).